We begin with the raw amino-acid sequence, 234 residues long: Glucosamine-6-phosphate deaminase (234 aa).

Asp63 (proton acceptor; for enolization step) is an active-site residue. The active-site For ring-opening step is Asn129. His131 serves as the catalytic Proton acceptor; for ring-opening step. Residue Glu136 is the For ring-opening step of the active site.

The protein belongs to the glucosamine/galactosamine-6-phosphate isomerase family. NagB subfamily.

It carries out the reaction alpha-D-glucosamine 6-phosphate + H2O = beta-D-fructose 6-phosphate + NH4(+). The protein operates within amino-sugar metabolism; N-acetylneuraminate degradation; D-fructose 6-phosphate from N-acetylneuraminate: step 5/5. Catalyzes the reversible isomerization-deamination of glucosamine 6-phosphate (GlcN6P) to form fructose 6-phosphate (Fru6P) and ammonium ion. This Listeria welshimeri serovar 6b (strain ATCC 35897 / DSM 20650 / CCUG 15529 / CIP 8149 / NCTC 11857 / SLCC 5334 / V8) protein is Glucosamine-6-phosphate deaminase.